Reading from the N-terminus, the 384-residue chain is Galactokinase (384 aa).

34–37 (EHTD) is a substrate binding site. 123 to 129 (SSGLSSS) provides a ligand contact to ATP. Mg(2+) contacts are provided by serine 129 and glutamate 161. The active-site Proton acceptor is the aspartate 173. Tyrosine 222 provides a ligand contact to substrate.

It belongs to the GHMP kinase family. GalK subfamily.

The protein localises to the cytoplasm. The enzyme catalyses alpha-D-galactose + ATP = alpha-D-galactose 1-phosphate + ADP + H(+). It participates in carbohydrate metabolism; galactose metabolism. Functionally, catalyzes the transfer of the gamma-phosphate of ATP to D-galactose to form alpha-D-galactose-1-phosphate (Gal-1-P). In Haemophilus influenzae (strain PittEE), this protein is Galactokinase.